The primary structure comprises 1770 residues: NEDD4-binding protein 2 (1770 aa).

Residues 1 to 40 (MPRRRKNLGGNPFRKTANPKEVVVSSVASREEPTTTLPSM) are disordered. Residues 46-89 (DQEELFTSISEIFSDLDPDVVYLMLSECDFKVENAMDCLLELSA) enclose the CUE domain. Coiled coils occupy residues 90 to 177 (TDTK…NDSS) and 218 to 259 (HSVL…IAGC). Residues 95 to 129 (EESSSQSFVASENQVGAAESKIMEKRPEEESEDSK) form a disordered region. Positions 97-108 (SSSQSFVASENQ) are enriched in polar residues. The segment covering 115–129 (KIMEKRPEEESEDSK) has biased composition (basic and acidic residues). 447 to 454 (GLPGSGKS) is a binding site for ATP. Disordered stretches follow at residues 712-756 (SKTD…GEIV), 795-822 (KTIG…YNYP), 836-862 (DCVQ…ASEP), and 890-913 (SLAQ…LEIG). Residues 843-856 (SPHESVEDGRKSQC) show a composition bias toward basic and acidic residues. Ser906 carries the phosphoserine modification. A Phosphothreonine modification is found at Thr1210. A disordered region spans residues 1580–1606 (NENVTSHTGQKSKEKKPKKLKETEETP). A Smr domain is found at 1691–1770 (LDLHGLHVDE…KPGCLKVMLK (80 aa)).

In terms of assembly, binds NEDD4. Binds BCL3 and CREBBP. Post-translationally, ubiquitinated; this targets the protein for degradation by the proteasome.

The protein localises to the cytoplasm. Has 5'-polynucleotide kinase and nicking endonuclease activity. May play a role in DNA repair or recombination. This is NEDD4-binding protein 2 (N4BP2) from Homo sapiens (Human).